Here is a 346-residue protein sequence, read N- to C-terminus: Low specificity L-threonine aldolase (346 aa).

K207 is subject to N6-(pyridoxal phosphate)lysine.

Belongs to the threonine aldolase family. As to quaternary structure, homotetramer. Pyridoxal 5'-phosphate is required as a cofactor.

The enzyme catalyses L-threonine = acetaldehyde + glycine. The catalysed reaction is L-allo-threonine = acetaldehyde + glycine. Functionally, catalyzes the cleavage of L-allo-threonine and L-threonine to glycine and acetaldehyde. Can also act on L-erythro-phenylserine, L-threo-phenylserine, L-beta-3,4-methylenedioxyphenylserine and L-beta-3,4-dihydroxyphenylserine. The polypeptide is Low specificity L-threonine aldolase (ltaE) (Pseudomonas sp. (strain NCIMB 10558)).